The sequence spans 104 residues: Large ribosomal subunit protein uL24 (104 aa).

This sequence belongs to the universal ribosomal protein uL24 family. In terms of assembly, part of the 50S ribosomal subunit.

In terms of biological role, one of two assembly initiator proteins, it binds directly to the 5'-end of the 23S rRNA, where it nucleates assembly of the 50S subunit. Its function is as follows. One of the proteins that surrounds the polypeptide exit tunnel on the outside of the subunit. This Dichelobacter nodosus (strain VCS1703A) protein is Large ribosomal subunit protein uL24.